The sequence spans 71 residues: R-phycoerythrin gamma-1 chain, chloroplastic (71 aa).

2 residues coordinate phycourobilin: cysteine 25 and cysteine 34. Cysteine 49 contributes to the (2R,3E)-phycoerythrobilin binding site. Phycourobilin is bound at residue cysteine 58.

In terms of assembly, heteromer of 6 alpha, 6 beta and 1 gamma chains. Post-translationally, contains four covalently linked bilin chromophores.

It localises to the plastid. The protein resides in the chloroplast thylakoid membrane. Critical for the incorporation of phycoerythrin in the phycobilisome complex. This chain is R-phycoerythrin gamma-1 chain, chloroplastic, found in Gastroclonium coulteri (Red alga).